Here is a 185-residue protein sequence, read N- to C-terminus: MSKEVLSKSKEKMEKAEQALTRQLGTIRAGRANASLLDRLSVDYYGAATPVNQMASISVPEARMLLITPYDKTILGEIEKAILKSDLGLTPNNDGSVLRLSIPQLTEERRKELVKEVKKEAEEAKVAVRNIRREANEELKKLEKNGDITEDDLRSYGEDVQKLTDESIKNIDSITKDKEAEILEV.

It belongs to the RRF family.

The protein resides in the cytoplasm. In terms of biological role, responsible for the release of ribosomes from messenger RNA at the termination of protein biosynthesis. May increase the efficiency of translation by recycling ribosomes from one round of translation to another. This chain is Ribosome-recycling factor, found in Listeria monocytogenes serovar 1/2a (strain ATCC BAA-679 / EGD-e).